Reading from the N-terminus, the 309-residue chain is Ankyrin repeat protein VACWR203 (309 aa).

ANK repeat units follow at residues 13 to 44 (SVFK…SLTI), 110 to 142 (KYGT…DINA), 160 to 189 (FVYH…DLTI), 197 to 231 (PVVY…RASH), and 269 to 298 (EGRT…DIVV).

The protein belongs to the orthopoxviruses VACWR203 protein family.

This is Ankyrin repeat protein VACWR203 from Bos taurus (Bovine).